The sequence spans 354 residues: Uroporphyrinogen decarboxylase (354 aa).

Substrate contacts are provided by residues 27-31 (RQAGR), phenylalanine 46, aspartate 77, tyrosine 154, threonine 209, and histidine 327.

The protein belongs to the uroporphyrinogen decarboxylase family. In terms of assembly, homodimer.

Its subcellular location is the cytoplasm. It catalyses the reaction uroporphyrinogen III + 4 H(+) = coproporphyrinogen III + 4 CO2. Its pathway is porphyrin-containing compound metabolism; protoporphyrin-IX biosynthesis; coproporphyrinogen-III from 5-aminolevulinate: step 4/4. Functionally, catalyzes the decarboxylation of four acetate groups of uroporphyrinogen-III to yield coproporphyrinogen-III. This Escherichia coli O157:H7 protein is Uroporphyrinogen decarboxylase.